A 1117-amino-acid chain; its full sequence is MALATGAKYYHSCINCGGINTDTRNEKGLPCEVCLPFEDGDVLKGLKLNNSLKGYEKYWNLNQQYKEFEEFFFSKINKKPTGYQRFWAKRLLLSKSFTLVAPTGVGKTTFGLISALWIAKKGGKVALVFPTVSLVEQAAKRLIEFSKEDEDVNILFYTSSLKKKEREKFEKNFSEGNYDILVISSQFISKRKEQLSQKVFDLVFVDDVDAVLKSSKNIDTLLNMIGISQKAIDSTLDNLKKGNNSDKIQIEEKAPKGRLIVSSATAKPKGIKPLLFRELLGFEIGRFTTSARNITNVRIKEKSLEKLLYIINLLKDGILLFVPTEEEGKEIANYLEEHGVKLGKTWEDFEKSFEKFKEGSLQLLCGIYSYYGKLVRGIDLPLRIKFAVFWGTPSFKFSTKLENAPRFILERNFQDYLENNPKLKAYFKDLQRLSTEKLRKSVEKYISPETWEKLIQKNFPTTKFDKEKNLIVIPDVYTYIQASGRTSRIFGTSLTKGISILFEEDDSLFELLKARLLYLTEEEWTEEGEIEHLVKEAEETRKAISTDSSSKDMKSRMIIVESPTKAQTISKFLEKSSTRRYGSLMVHESITQEGILLLTASKGHLYDLETKTGLHGVEINDGRFIPYYNSIKRCSSCGAQFTDELPRCPYCNSDKIDDKKKILEALRDIAMEVDEVIIATDPDVEGEKIGWDISQYIKPVNKNVQRIEMHEITKFGFDKAIRNRRNCDVNLVKSQIVRRIEDRWVGFELSLRLQKNFQNSNLSAGRVQSTVLGWILEKEIEHSKSKKTVTQFTLDNGFKFEVDGKIDVDEVEVEIVEEKEQALSPLPPFNTPSLLTAASQQFKLPVQQIMEILQTLFELGFITYHRTDSTRISSTGQKIARSYLEKIGKITLLSEREWGKEGAHEAIRPVKPISPEELSEFITEKIAAYLSPMHIKVYSLIFNRFMASQMTSPVVINQKILIKNGSFQVEREVPVKLQEEGWNIFNPITVYTPFEEKKYSVVSKRTYTTHTVPLFTQASLIEEMQKRNIGRPSTYAKIVDILFKRKYIIEDVYKRLRTTALGRKVYSYLSERYMNYINEETTRQLEKLMESVETGEKDYQSVLKNLYEELNEILIKN.

The segment at 3–42 adopts an RG N-terminal-type zinc-finger fold; that stretch reads LATGAKYYHSCINCGGINTDTRNEKGLPCEVCLPFEDGDV. Residues cysteine 13, cysteine 16, cysteine 31, and cysteine 34 each contribute to the Zn(2+) site. ATP is bound by residues glutamine 84 and 101-108; that span reads APTGVGKT. The region spanning 88–284 is the Helicase ATP-binding domain; the sequence is AKRLLLSKSF…LFRELLGFEI (197 aa). The DEAD box signature appears at 206–209; sequence DDVD. Positions 551–1117 are topoisomerase I; the sequence is KDMKSRMIIV…EELNEILIKN (567 aa). One can recognise a Toprim domain in the interval 555–712; that stretch reads SRMIIVESPT…NVQRIEMHEI (158 aa). Position 561 (glutamate 561) interacts with Mg(2+). Residues 631–658 form an RG C-terminal-type zinc finger; sequence IKRCSSCGAQFTDELPRCPYCNSDKIDD. Zn(2+) contacts are provided by cysteine 634, cysteine 637, cysteine 648, and cysteine 651. Aspartate 681 contacts Mg(2+). Residues 728–1114 form the Topo IA-type catalytic domain; it reads DVNLVKSQIV…NLYEELNEIL (387 aa). Tyrosine 864 functions as the O-(5'-phospho-DNA)-tyrosine intermediate in the catalytic mechanism.

It in the N-terminal section; belongs to the DEAD box helicase family. DDVD subfamily. In the C-terminal section; belongs to the type IA topoisomerase family. As to quaternary structure, monomer. It depends on Zn(2+) as a cofactor. The cofactor is Mg(2+).

The protein localises to the cytoplasm. The enzyme catalyses ATP + H2O = ADP + phosphate + H(+). Its function is as follows. Modifies the topological state of DNA by introducing positive supercoils in an ATP-dependent process, increasing the linking number in steps of +1; also positively supercoils with dATP and ATP-gamma-S. With UTP or dTTP relaxes negatively supercoiled DNA, in the absence of any nucleotide partially relaxes negative supercoils. In the absence of nucleotide has a higher affinity for dsDNA with a single-stranded tail than dsDNA or ssDNA. Has an ATPase activity in the absence of DNA. Binds to single-stranded DNA, transiently cleaves and then rejoins the ends, introducing a positive supercoil in the process. The scissile phosphodiester is attacked by the catalytic tyrosine of the enzyme, resulting in the formation of a DNA-(5'-phosphotyrosyl)-enzyme intermediate. Probably involved in rewinding DNA strands in regions of the chromosome that have opened up to allow replication, transcription, DNA repair and/or for DNA protection. This chain is Reverse gyrase, found in Caldanaerobacter subterraneus subsp. tengcongensis (strain DSM 15242 / JCM 11007 / NBRC 100824 / MB4) (Thermoanaerobacter tengcongensis).